The sequence spans 945 residues: Isoleucine--tRNA ligase (945 aa).

The short motif at Pro67 to His77 is the 'HIGH' region element. Glu573 is an L-isoleucyl-5'-AMP binding site. The 'KMSKS' region motif lies at Lys614–Ser618. Residue Lys617 participates in ATP binding. Cys908, Cys911, Cys928, and Cys931 together coordinate Zn(2+).

The protein belongs to the class-I aminoacyl-tRNA synthetase family. IleS type 1 subfamily. Monomer. Zn(2+) is required as a cofactor.

Its subcellular location is the cytoplasm. It catalyses the reaction tRNA(Ile) + L-isoleucine + ATP = L-isoleucyl-tRNA(Ile) + AMP + diphosphate. Catalyzes the attachment of isoleucine to tRNA(Ile). As IleRS can inadvertently accommodate and process structurally similar amino acids such as valine, to avoid such errors it has two additional distinct tRNA(Ile)-dependent editing activities. One activity is designated as 'pretransfer' editing and involves the hydrolysis of activated Val-AMP. The other activity is designated 'posttransfer' editing and involves deacylation of mischarged Val-tRNA(Ile). The protein is Isoleucine--tRNA ligase of Acinetobacter baylyi (strain ATCC 33305 / BD413 / ADP1).